We begin with the raw amino-acid sequence, 581 residues long: Protein alan shepard (581 aa).

Over residues 1–10 (MHPRYSPAPP) the composition is skewed to pro residues. A disordered region spans residues 1–73 (MHPRYSPAPP…AVTAAPPTPR (73 aa)). Tyr5 bears the Phosphotyrosine mark. A compositionally biased stretch (polar residues) spans 35 to 54 (ANNSQQLPPQMPRSQNYANG). Positions 55–68 (SSSSAAAASAVTAA) are enriched in low complexity. 2 positions are modified to phosphotyrosine: Tyr128 and Tyr146. The segment covering 168–226 (PATTTYGQRVPTAASPSNTNSSSSSNTGSQSGTLSTSLSHTTNTNTNMGPNGTAQNQNQ) has biased composition (low complexity). Residues 168 to 234 (PATTTYGQRV…NQQGGGGEQL (67 aa)) are disordered. RRM domains lie at 237–310 (TNLY…MAKQ) and 316–395 (TNLY…FADG). The segment at 555–581 (MTDSEQASTAASPDEAYTQYPHQAAPK) is disordered.

Functionally, has a role in the perception of gravity. The chain is Protein alan shepard from Drosophila willistoni (Fruit fly).